The primary structure comprises 306 residues: Pantothenate kinase (306 aa).

An ATP-binding site is contributed by 91-98 (GSVAVGKS).

The protein belongs to the prokaryotic pantothenate kinase family.

It localises to the cytoplasm. The catalysed reaction is (R)-pantothenate + ATP = (R)-4'-phosphopantothenate + ADP + H(+). Its pathway is cofactor biosynthesis; coenzyme A biosynthesis; CoA from (R)-pantothenate: step 1/5. The protein is Pantothenate kinase of Streptococcus pneumoniae serotype 19F (strain G54).